Reading from the N-terminus, the 532-residue chain is Nectin-4 (532 aa).

The first 30 residues, 1-30 (MGPLHGALLPPISVTVSLLILLLCAPGGRC), serve as a signal peptide directing secretion. Residues 31–142 (GVVHTEKSMT…GNFDAELELK (112 aa)) form the Ig-like V-type domain. Residues 31-344 (GVVHTEKSMT…TKIDLVSVSL (314 aa)) lie on the Extracellular side of the membrane. 3 cysteine pairs are disulfide-bonded: Cys-51–Cys-125, Cys-169–Cys-221, and Cys-266–Cys-312. Ig-like C2-type domains lie at 146 to 235 (PPLP…KRIT) and 244 to 328 (AEVS…AIVS). The segment at 152 to 179 (GPGPPLTEGEGKSLAASCTAEGNPAPTL) is disordered. N-linked (GlcNAc...) asparagine glycosylation is found at Asn-189 and Asn-282. Residues 345 to 365 (GSVGILTAVLLVVLVITLLLV) form a helical membrane-spanning segment. Topologically, residues 366–532 (NRHHKRQTKQ…IYINGRGHLV (167 aa)) are cytoplasmic. The tract at residues 453–491 (QTELLSTVPDEEVKEDGEEPEQVEQSLEKEPNPTEPDGM) is disordered. Acidic residues predominate over residues 461–474 (PDEEVKEDGEEPEQ).

This sequence belongs to the nectin family.

The protein localises to the cell membrane. Functionally, may be involved in cell adhesion. This Xenopus tropicalis (Western clawed frog) protein is Nectin-4.